Here is a 165-residue protein sequence, read N- to C-terminus: Glucosamine 6-phosphate N-acetyltransferase 1 (165 aa).

In terms of domain architecture, N-acetyltransferase spans Y22–F165. Residues S44, K92–R95, and E104–V106 each bind substrate. G114–E119 provides a ligand contact to acetyl-CoA. A substrate-binding site is contributed by Y135–K136. Y149–K151 is an acetyl-CoA binding site.

It belongs to the acetyltransferase family. GNA1 subfamily. Homodimer. Highly expressed in the root elongation zone and at lower levels in leaves and grains.

The protein localises to the endoplasmic reticulum membrane. The enzyme catalyses D-glucosamine 6-phosphate + acetyl-CoA = N-acetyl-D-glucosamine 6-phosphate + CoA + H(+). Its pathway is nucleotide-sugar biosynthesis; UDP-N-acetyl-alpha-D-glucosamine biosynthesis; N-acetyl-alpha-D-glucosamine 1-phosphate from alpha-D-glucosamine 6-phosphate (route I): step 1/2. In terms of biological role, acetyltransferase involved in de novo biosynthesis of UDP-N-acetylglucosamine (UDP-GlcNAc) in roots and is required for maintaining normal root cell shape. UDP-GlcNAc is an essential metabolite that serves as an initial sugar donor for N-glycan synthesis and thus plays an important role in protein and lipid glycosylation. In Oryza sativa subsp. japonica (Rice), this protein is Glucosamine 6-phosphate N-acetyltransferase 1 (GNA1).